We begin with the raw amino-acid sequence, 452 residues long: Gamma-aminobutyric acid receptor subunit delta (452 aa).

An N-terminal signal peptide occupies residues 1–24 (MDAPARLLAPLLLLCAQQLRGTRA). The Extracellular portion of the chain corresponds to 25-251 (MNDIGDYVGS…HLRRNRGVYI (227 aa)). N-linked (GlcNAc...) asparagine glycosylation is found at Asn103 and Asn106. A disulfide bridge connects residues Cys164 and Cys178. Residues 252–271 (IQSYMPSVLLVAMSWVSFWI) form a helical membrane-spanning segment. Residues 272–275 (SQAA) are Cytoplasmic-facing. A helical transmembrane segment spans residues 276–298 (VPARVSLGITTVLTMTTLMVSAR). The Extracellular portion of the chain corresponds to 299–308 (SSLPRASAIK). A helical membrane pass occupies residues 309-331 (ALDVYFWICYVFVFAALVEYAFA). Residues 332 to 426 (HFNADYRKKQ…ARLRPIDADT (95 aa)) are Cytoplasmic-facing. A Phosphoserine modification is found at Ser390. Residues 427–449 (IDIYARAVFPAAFAAVNVIYWAA) form a helical membrane-spanning segment. Over 450 to 452 (YAM) the chain is Extracellular.

Belongs to the ligand-gated ion channel (TC 1.A.9) family. Gamma-aminobutyric acid receptor (TC 1.A.9.5) subfamily. GABRD sub-subfamily. In terms of assembly, heteropentamer, formed by a combination of alpha (GABRA1-6), beta (GABRB1-3), gamma (GABRG1-3), delta (GABRD), epsilon (GABRE), rho (GABRR1-3), pi (GABRP) and theta (GABRQ) chains, each subunit exhibiting distinct physiological and pharmacological properties.

Its subcellular location is the cell membrane. The catalysed reaction is chloride(in) = chloride(out). Functionally, delta subunit of the heteropentameric ligand-gated chloride channel gated by gamma-aminobutyric acid (GABA), a major inhibitory neurotransmitter in the brain. GABA-gated chloride channels, also named GABA(A) receptors (GABAAR), consist of five subunits arranged around a central pore and contain GABA active binding site(s) located at the alpha and beta subunit interface(s). When activated by GABA, GABAARs selectively allow the flow of chloride anions across the cell membrane down their electrochemical gradient. GABAARs containing delta/GABRD subunits are predominantly located in extrasynaptic or perisynaptic positions on hippocampus and cerebellar granule cells, and contribute to the tonic GABAergic inhibition. GABAAR containing alpha-4-beta-3-delta subunits can simultaneously bind GABA and histamine where histamine binds at the interface of two neighboring beta subunits, which may be involved in the regulation of sleep and wakefulness. This is Gamma-aminobutyric acid receptor subunit delta from Homo sapiens (Human).